Reading from the N-terminus, the 587-residue chain is Vesicular glutamate transporter 2.2 (587 aa).

Topologically, residues 1-71 (MDTVKERVLA…CTCFGLPRRY (71 aa)) are cytoplasmic. A helical transmembrane segment spans residues 72–92 (IIAIMSGLGFCISFGIRCNLG). At 93 to 125 (VAIVDMVNNSTIHKGGKIIIKGKAKFNWDPETV) the chain is on the vesicular side. 2 N-linked (GlcNAc...) asparagine glycosylation sites follow: Asn-100 and Asn-101. Residues 126 to 146 (GMIHGSFFWGYTVTQIPGGYI) form a helical membrane-spanning segment. The Cytoplasmic portion of the chain corresponds to 147–149 (SSR). Residues 150-170 (LAANRVFGAAILLTSTLNMFI) traverse the membrane as a helical segment. Residues 171–180 (PSAARVHYGC) are Vesicular-facing. Residues 181-203 (VMFVRILQGLVEGVTYPACHGIW) traverse the membrane as a helical segment. The Cytoplasmic portion of the chain corresponds to 204-217 (SKWAPPLERSRLAT). Residues 218 to 238 (TSFCGSYAGAVVAMPLAGILV) form a helical membrane-spanning segment. The Vesicular portion of the chain corresponds to 239–245 (QYSGWSS). A helical transmembrane segment spans residues 246 to 266 (VFYIYGSFGIVWYMFWILVSY). The Cytoplasmic segment spans residues 267 to 311 (ESPADHPTITDEERTYIEESIGESAKLLGAMEKYKTPWRKFFTSM). Residues 312 to 332 (PVYAIIVANFCRSWTFYLLLI) traverse the membrane as a helical segment. Topologically, residues 333 to 350 (SQPAYFEEVFGFEISKVG) are vesicular. The helical transmembrane segment at 351 to 371 (MVSALPHLVMTIIVPIGGQLA) threads the bilayer. Topologically, residues 372–387 (DYLRSKNILTTTTVRK) are cytoplasmic. A helical transmembrane segment spans residues 388 to 408 (IMNCGGFGMEATLLLVVGFSH). The Vesicular segment spans residues 409 to 410 (SK). Residues 411 to 431 (GVAISFLVLAVGFSGFAISGF) traverse the membrane as a helical segment. At 432-444 (NVNHLDIAPRYAS) the chain is on the cytoplasmic side. Residues 445–465 (ILMGISNGVGTLSGMVCPLIV) traverse the membrane as a helical segment. Topologically, residues 466 to 479 (GAMTKNKTREEWQN) are vesicular. A glycan (N-linked (GlcNAc...) asparagine) is linked at Asn-471. The helical transmembrane segment at 480 to 500 (VFLIASLVHYGGVIFYGIFAS) threads the bilayer. Residues 501–587 (GEKQPWADPE…ERTYTGDGYS (87 aa)) are Cytoplasmic-facing.

The protein belongs to the major facilitator superfamily. Sodium/anion cotransporter family. VGLUT subfamily. Expressed in spinal cord.

Its subcellular location is the cytoplasmic vesicle. The protein resides in the secretory vesicle. It is found in the synaptic vesicle membrane. The protein localises to the membrane. It localises to the synapse. Its subcellular location is the synaptosome. The protein resides in the cell membrane. The catalysed reaction is L-glutamate(out) = L-glutamate(in). The enzyme catalyses 3 Na(+)(out) + phosphate(out) = 3 Na(+)(in) + phosphate(in). It carries out the reaction phosphate(in) = phosphate(out). It catalyses the reaction K(+)(in) + H(+)(out) = K(+)(out) + H(+)(in). The catalysed reaction is chloride(in) = chloride(out). Chloride channel activity is allosterically activated by lumenal H(+) and Cl(-) leading to synaptic vesicles acidification. The L-glutamate transport activity is allosterically activated by lumenal H(+) and Cl(-). The allosteric requirement for H(+) efficiently prevents non-vesicular efflux across the plasma membrane. The L-glutamate uniporter activity exhibits a biphasic dependence on chloride concentration. Functionally, multifunctional transporter that transports L-glutamate as well as multiple ions such as chloride, proton, potassium, sodium and phosphate. At the synaptic vesicle membrane, mainly functions as a uniporter which transports preferentially L-glutamate but also, phosphate from the cytoplasm into synaptic vesicles at presynaptic nerve terminals of excitatory neural cells. The L-glutamate or phosphate uniporter activity is electrogenic and is driven by the proton electrochemical gradient, mainly by the electrical gradient established by the vacuolar H(+)-ATPase across the synaptic vesicle membrane. In addition, functions as a chloride channel that allows a chloride permeation through the synaptic vesicle membrane therefore affects the proton electrochemical gradient and promotes synaptic vesicles acidification. Moreover, functions as a vesicular K(+)/H(+) antiport allowing to maintain the electrical gradient and to decrease chemical gradient and therefore sustain vesicular L-glutamate uptake. The vesicular H(+)/H(+) antiport activity is electroneutral. At the plasma membrane, following exocytosis, functions as a symporter of Na(+) and phosphate from the extracellular space to the cytoplasm allowing synaptic phosphate homeostasis regulation. The symporter activity is driven by an inside negative membrane potential and is electrogenic. Also involved in the regulation of retinal hyaloid vessel regression during postnatal development. May also play a role in the endocrine L-glutamatergic system of other tissues such as pineal gland and pancreas. In Danio rerio (Zebrafish), this protein is Vesicular glutamate transporter 2.2 (slc17a6a).